Here is a 235-residue protein sequence, read N- to C-terminus: Purine nucleoside phosphorylase DeoD-type (235 aa).

An a purine D-ribonucleoside-binding site is contributed by histidine 4. Phosphate-binding positions include glycine 20, arginine 24, arginine 43, and 87–90; that span reads RVGT. A purine D-ribonucleoside contacts are provided by residues 178–180 and 202–203; these read EME and SD. The active-site Proton donor is aspartate 203.

This sequence belongs to the PNP/UDP phosphorylase family. As to quaternary structure, homohexamer; trimer of homodimers.

It catalyses the reaction a purine D-ribonucleoside + phosphate = a purine nucleobase + alpha-D-ribose 1-phosphate. The catalysed reaction is a purine 2'-deoxy-D-ribonucleoside + phosphate = a purine nucleobase + 2-deoxy-alpha-D-ribose 1-phosphate. Its function is as follows. Catalyzes the reversible phosphorolytic breakdown of the N-glycosidic bond in the beta-(deoxy)ribonucleoside molecules, with the formation of the corresponding free purine bases and pentose-1-phosphate. In Geobacillus sp. (strain WCH70), this protein is Purine nucleoside phosphorylase DeoD-type.